Here is a 548-residue protein sequence, read N- to C-terminus: Chaperonin GroEL (548 aa).

ATP contacts are provided by residues 30 to 33 (TLGP), Lys51, 87 to 91 (DGTTT), Gly415, 479 to 481 (NAA), and Asp495.

The protein belongs to the chaperonin (HSP60) family. As to quaternary structure, forms a cylinder of 14 subunits composed of two heptameric rings stacked back-to-back. Interacts with the co-chaperonin GroES.

Its subcellular location is the cytoplasm. The enzyme catalyses ATP + H2O + a folded polypeptide = ADP + phosphate + an unfolded polypeptide.. Its function is as follows. Together with its co-chaperonin GroES, plays an essential role in assisting protein folding. The GroEL-GroES system forms a nano-cage that allows encapsulation of the non-native substrate proteins and provides a physical environment optimized to promote and accelerate protein folding. The polypeptide is Chaperonin GroEL (Proteus mirabilis (strain HI4320)).